The sequence spans 241 residues: Isoprenyl transferase (241 aa).

Asp-17 is an active-site residue. Asp-17 is a binding site for Mg(2+). Substrate-binding positions include 18 to 21 (GNGR), Trp-22, Arg-30, His-34, and 62 to 64 (STE). The active-site Proton acceptor is Asn-65. Substrate is bound by residues Trp-66, Arg-68, Arg-186, and 192-194 (RLS). Mg(2+) is bound at residue Glu-205.

The protein belongs to the UPP synthase family. As to quaternary structure, homodimer. Mg(2+) is required as a cofactor.

Catalyzes the condensation of isopentenyl diphosphate (IPP) with allylic pyrophosphates generating different type of terpenoids. The polypeptide is Isoprenyl transferase (Leptospira interrogans serogroup Icterohaemorrhagiae serovar copenhageni (strain Fiocruz L1-130)).